The primary structure comprises 911 residues: Bifunctional aspartokinase/homoserine dehydrogenase 1, chloroplastic (911 aa).

Residues 1-82 (MPVVSLAKVV…VENGHLPKGD (82 aa)) constitute a chloroplast transit peptide. An aspartokinase region spans residues 83 to 331 (SWAVHKFGGT…VSEAVVLKTL (249 aa)). An interface region spans residues 332-557 (SYQEAWEMSY…LSRTTLAVGI (226 aa)). 2 ACT domains span residues 407–482 (VEGT…IIPN) and 488–565 (AVGQ…LIGG). The interval 558–911 (IGPGLIGGTL…RLAFYLGAPS (354 aa)) is homoserine dehydrogenase. NAD(+) contacts are provided by Ile563 and Thr644. 3 residues coordinate NADP(+): Ile563, Thr644, and Lys668. 3 residues coordinate NADPH: Ile563, Thr644, and Lys668. Na(+) contacts are provided by Glu695, Val698, Ala700, and Leu702. The NADP(+) site is built by Gly753 and Glu756. L-homoserine contacts are provided by Glu756 and Asp767. Lys771 acts as the Proton donor in catalysis. Residue Gly888 participates in NAD(+) binding. Position 888 (Gly888) interacts with NADP(+). Gly888 is a binding site for NADPH.

The protein in the N-terminal section; belongs to the aspartokinase family. In the C-terminal section; belongs to the homoserine dehydrogenase family. As to quaternary structure, homo- or heterodimer. The cofactor is a metal cation.

It is found in the plastid. It localises to the chloroplast. The enzyme catalyses L-homoserine + NADP(+) = L-aspartate 4-semialdehyde + NADPH + H(+). The catalysed reaction is L-homoserine + NAD(+) = L-aspartate 4-semialdehyde + NADH + H(+). It carries out the reaction L-aspartate + ATP = 4-phospho-L-aspartate + ADP. Its pathway is amino-acid biosynthesis; L-lysine biosynthesis via DAP pathway; (S)-tetrahydrodipicolinate from L-aspartate: step 1/4. It participates in amino-acid biosynthesis; L-methionine biosynthesis via de novo pathway; L-homoserine from L-aspartate: step 1/3. The protein operates within amino-acid biosynthesis; L-methionine biosynthesis via de novo pathway; L-homoserine from L-aspartate: step 3/3. It functions in the pathway amino-acid biosynthesis; L-threonine biosynthesis; L-threonine from L-aspartate: step 1/5. Its pathway is amino-acid biosynthesis; L-threonine biosynthesis; L-threonine from L-aspartate: step 3/5. Inhibition of aspartate kinase activity by threonine and leucine and 3-fold activation by cysteine, isoleucine, valine, serine and alanine at 2.5 mM. Partial inhibition of homoserine dehydrogenase activity by threonine and cysteine (14% of activity remaining at saturation with either amino acid). No synergy between the effectors for both activation or inhibition. In terms of biological role, bifunctional aspartate kinase and homoserine dehydrogenase that catalyzes the first and the third steps toward the synthesis of lysine, methionine and threonine from aspartate. The polypeptide is Bifunctional aspartokinase/homoserine dehydrogenase 1, chloroplastic (Arabidopsis thaliana (Mouse-ear cress)).